Consider the following 153-residue polypeptide: Insulin-like growth factor 1 (153 aa).

A b region spans residues 49-77 (GPETLCGAELVDALQFVCGDRGFYFSKPT). 3 disulfide bridges follow: C54-C96, C66-C109, and C95-C100. The interval 78-89 (GYGSSSRRLHHK) is c. Positions 90 to 110 (GIVDECCFQSCDLRRLEMYCA) are a. Residues 111–118 (PIKPPKSA) are d. Positions 119 to 153 (RSVRAQRHTDMPKAQKEVHLKNTSRGNTGNRNYRM) are cleaved as a propeptide — e peptide. Residues 119–153 (RSVRAQRHTDMPKAQKEVHLKNTSRGNTGNRNYRM) are disordered. Basic and acidic residues predominate over residues 125 to 138 (RHTDMPKAQKEVHL). Positions 139-153 (KNTSRGNTGNRNYRM) are enriched in polar residues.

The protein belongs to the insulin family. As to quaternary structure, forms a ternary complex with IGFR1 and ITGAV:ITGB3. Forms a ternary complex with IGFR1 and ITGA6:ITGB4. Forms a ternary complex with IGFBP3 and ALS.

Its subcellular location is the secreted. In terms of biological role, the insulin-like growth factors, isolated from plasma, are structurally and functionally related to insulin but have a much higher growth-promoting activity. Acts as a ligand for IGF1R. Binds to the alpha subunit of IGF1R, leading to the activation of the intrinsic tyrosine kinase activity which autophosphorylates tyrosine residues in the beta subunit thus initiatiating a cascade of down-stream signaling events leading to activation of the PI3K-AKT/PKB and the Ras-MAPK pathways. Binds to integrins. Its binding to integrins and subsequent ternary complex formation with integrins and IGFR1 are essential for IGF1 signaling. This chain is Insulin-like growth factor 1, found in Gallus gallus (Chicken).